Here is a 335-residue protein sequence, read N- to C-terminus: N-acetylmuramoyl-L-alanine amidase sle1 (335 aa).

The signal sequence occupies residues 1 to 25 (MQKKVIAAIIGTSAISAVAATQANA). Positions 27-70 (TTHTVKPGESVWAISNKYGISIAKLKSLNNLTSNLIFPNQVLKV) constitute a LysM 1 domain. The segment covering 71 to 86 (SGSSNSTSNSSRPSTN) has biased composition (low complexity). The segment at 71 to 90 (SGSSNSTSNSSRPSTNSGGG) is disordered. 2 LysM domains span residues 91-134 (SYYT…KLKV) and 158-201 (SYYT…KLKV). The 125-residue stretch at 211 to 335 (ASATTTNRGY…YQVNNYRYIH (125 aa)) folds into the Peptidase C51 domain.

The protein localises to the secreted. It is found in the cell surface. It catalyses the reaction Hydrolyzes the link between N-acetylmuramoyl residues and L-amino acid residues in certain cell-wall glycopeptides.. In terms of biological role, peptidoglycan hydrolase involved in the splitting of the septum during cell division. This chain is N-acetylmuramoyl-L-alanine amidase sle1 (sle1), found in Staphylococcus aureus (strain bovine RF122 / ET3-1).